The sequence spans 218 residues: Small ribosomal subunit protein uS3c (218 aa).

Residues 47–120 form the KH type-2 domain; the sequence is VRTHIKSSSN…KLHIAIEKVA (74 aa).

The protein belongs to the universal ribosomal protein uS3 family. Part of the 30S ribosomal subunit.

Its subcellular location is the plastid. The protein localises to the chloroplast. The protein is Small ribosomal subunit protein uS3c (rps3) of Picea abies (Norway spruce).